A 368-amino-acid polypeptide reads, in one-letter code: Methylthioribose-1-phosphate isomerase (368 aa).

Substrate contacts are provided by residues 54 to 56, Arg91, and Gln204; that span reads RGA. The active-site Proton donor is the Asp245. Residue 255-256 coordinates substrate; the sequence is NK.

This sequence belongs to the eIF-2B alpha/beta/delta subunits family. MtnA subfamily.

The enzyme catalyses 5-(methylsulfanyl)-alpha-D-ribose 1-phosphate = 5-(methylsulfanyl)-D-ribulose 1-phosphate. It functions in the pathway amino-acid biosynthesis; L-methionine biosynthesis via salvage pathway; L-methionine from S-methyl-5-thio-alpha-D-ribose 1-phosphate: step 1/6. Catalyzes the interconversion of methylthioribose-1-phosphate (MTR-1-P) into methylthioribulose-1-phosphate (MTRu-1-P). The polypeptide is Methylthioribose-1-phosphate isomerase (Gluconobacter oxydans (strain 621H) (Gluconobacter suboxydans)).